A 56-amino-acid chain; its full sequence is UPF0391 membrane protein Noc_0482 (56 aa).

2 consecutive transmembrane segments (helical) span residues 1–21 (MFGW…FGFT) and 29–49 (HIAW…LLLG).

Belongs to the UPF0391 family.

It is found in the cell membrane. This is UPF0391 membrane protein Noc_0482 from Nitrosococcus oceani (strain ATCC 19707 / BCRC 17464 / JCM 30415 / NCIMB 11848 / C-107).